Here is a 95-residue protein sequence, read N- to C-terminus: MELVLVFLCSLLAPMVLASAAEKEKEMDPFHYDYQTLRIGGLVFAVVLFSVGILLILSRRCKCSFNQKPRAPGDEEAQVENLITANATEPQKAEN.

The signal sequence occupies residues 1–18 (MELVLVFLCSLLAPMVLA). Residues 19 to 35 (SAAEKEKEMDPFHYDYQ) are Extracellular-facing. A helical transmembrane segment spans residues 36 to 57 (TLRIGGLVFAVVLFSVGILLIL). The Cytoplasmic portion of the chain corresponds to 58–95 (SRRCKCSFNQKPRAPGDEEAQVENLITANATEPQKAEN). Positions 69 to 95 (PRAPGDEEAQVENLITANATEPQKAEN) are disordered.

This sequence belongs to the FXYD family. As to quaternary structure, regulatory subunit of the sodium/potassium-transporting ATPase which is composed of a catalytic alpha subunit, a non-catalytic beta subunit and an additional regulatory subunit. The regulatory subunit, a member of the FXYD protein family, modulates the enzymatic activity in a tissue- and isoform-specific way by changing affinities of the Na+/K+-ATPase toward Na(+), K(+) or ATP.

It localises to the cell membrane. In terms of biological role, associates with and regulates the activity of the sodium/potassium-transporting ATPase (NKA) which catalyzes the hydrolysis of ATP coupled with the exchange of Na(+) and K(+) ions across the plasma membrane. Reduces the apparent affinity for intracellular Na(+) with no change in the apparent affinity for extracellular K(+). In addition to modulating NKA kinetics, may also function as a regulator of NKA localization to the plasma membrane. The polypeptide is FXYD domain-containing ion transport regulator 6 (Homo sapiens (Human)).